We begin with the raw amino-acid sequence, 336 residues long: Protein YIPF3 (336 aa).

Residues 1–73 (MSAPGGGRSG…AGAGGEEDGE (73 aa)) are disordered. The Cytoplasmic portion of the chain corresponds to 1-143 (MSAPGGGRSG…PVKMINFPQK (143 aa)). Acidic residues predominate over residues 55-73 (EEEEEAEGEAGAGGEEDGE). The chain crosses the membrane as a helical span at residues 144 to 164 (IAGELYGPLMLVFTLVAILLH). At 165–182 (GMKTSDTIIREGTLMGTA) the chain is on the lumenal side. A helical transmembrane segment spans residues 183–203 (IGTCFGYWLGVSSFIYFLAYL). The Cytoplasmic segment spans residues 204–209 (CNAQIT). A helical membrane pass occupies residues 210 to 230 (MVQMLSLLGYGLFGHCITLLV). The Lumenal segment spans residues 231-239 (TYNIHFHSL). The chain crosses the membrane as a helical span at residues 240–260 (FYIFWLVVGGLSTLRMVAVLV). Residues 261–269 (SRTVGHTQR) are Cytoplasmic-facing. A helical transmembrane segment spans residues 270–290 (LILCGTLAALHMLFLLYLHFA). Residues 291 to 336 (YHKVVEGILDTLEGPNMPPFQRVARDIPVVSNAVLNTTAKANAMTL) are Lumenal-facing. N326 is a glycosylation site (N-linked (GlcNAc...) asparagine).

It belongs to the YIP1 family.

It is found in the cell membrane. Its subcellular location is the golgi apparatus. The protein resides in the cis-Golgi network membrane. It localises to the cytoplasm. Involved in the maintenance of the Golgi structure. May play a role in hematopoiesis. This is Protein YIPF3 (YIPF3) from Gallus gallus (Chicken).